Reading from the N-terminus, the 654-residue chain is tRNA uridine 5-carboxymethylaminomethyl modification enzyme MnmG (654 aa).

17 to 22 (GGGHAG) is an FAD binding site. Position 289 to 303 (289 to 303 (GPRYCPSIEDKIVKF)) interacts with NAD(+).

Belongs to the MnmG family. Homodimer. Heterotetramer of two MnmE and two MnmG subunits. FAD serves as cofactor.

The protein localises to the cytoplasm. NAD-binding protein involved in the addition of a carboxymethylaminomethyl (cmnm) group at the wobble position (U34) of certain tRNAs, forming tRNA-cmnm(5)s(2)U34. The protein is tRNA uridine 5-carboxymethylaminomethyl modification enzyme MnmG of Prochlorococcus marinus subsp. pastoris (strain CCMP1986 / NIES-2087 / MED4).